The sequence spans 350 residues: Biotin synthase (350 aa).

A Radical SAM core domain is found at 41–265 (NEVQISRLLS…VMPLSRVRLS (225 aa)). 3 residues coordinate [4Fe-4S] cluster: Cys-56, Cys-60, and Cys-63. Positions 100, 131, 191, and 263 each coordinate [2Fe-2S] cluster.

Belongs to the radical SAM superfamily. Biotin synthase family. Homodimer. Requires [4Fe-4S] cluster as cofactor. [2Fe-2S] cluster serves as cofactor.

The catalysed reaction is (4R,5S)-dethiobiotin + (sulfur carrier)-SH + 2 reduced [2Fe-2S]-[ferredoxin] + 2 S-adenosyl-L-methionine = (sulfur carrier)-H + biotin + 2 5'-deoxyadenosine + 2 L-methionine + 2 oxidized [2Fe-2S]-[ferredoxin]. It functions in the pathway cofactor biosynthesis; biotin biosynthesis; biotin from 7,8-diaminononanoate: step 2/2. In terms of biological role, catalyzes the conversion of dethiobiotin (DTB) to biotin by the insertion of a sulfur atom into dethiobiotin via a radical-based mechanism. The sequence is that of Biotin synthase from Shewanella loihica (strain ATCC BAA-1088 / PV-4).